Reading from the N-terminus, the 493-residue chain is Alcohol-forming fatty acyl-CoA reductase (493 aa).

Belongs to the fatty acyl-CoA reductase family.

The enzyme catalyses a long-chain fatty acyl-CoA + 2 NADPH + 2 H(+) = a long-chain primary fatty alcohol + 2 NADP(+) + CoA. In terms of biological role, NADPH-dependent alcohol-forming fatty acyl-coenzyme A reductase that catalyzes the reduction of fatty acyl-CoA to fatty alcohols. The recombinant enzyme accepts saturated and mono-unsaturated fatty acyl-CoAs of 16 to 22 carbons. The protein is Alcohol-forming fatty acyl-CoA reductase of Simmondsia chinensis (Jojoba).